Here is a 588-residue protein sequence, read N- to C-terminus: Zeta-carotene desaturase, chloroplastic/chromoplastic (588 aa).

Belongs to the zeta carotene desaturase family. NAD(+) serves as cofactor. Requires NADP(+) as cofactor. The cofactor is FAD.

Its subcellular location is the plastid. It localises to the chloroplast. The protein resides in the chromoplast. The enzyme catalyses 9,9'-di-cis-zeta-carotene + 2 a quinone = 7,7',9,9'-tetra-cis-lycopene + 2 a quinol. Its pathway is carotenoid biosynthesis; lycopene biosynthesis. Its function is as follows. Catalyzes the conversion of zeta-carotene to lycopene via the intermediary of neurosporene. It carries out two consecutive desaturations (introduction of double bonds) at positions C-7 and C-7'. This Solanum lycopersicum (Tomato) protein is Zeta-carotene desaturase, chloroplastic/chromoplastic (ZDS).